A 636-amino-acid chain; its full sequence is tRNA uridine 5-carboxymethylaminomethyl modification enzyme MnmG (636 aa).

18–23 (GAGHAG) lines the FAD pocket. 281–295 (GPRYCPSIEDKIVRF) serves as a coordination point for NAD(+).

The protein belongs to the MnmG family. As to quaternary structure, homodimer. Heterotetramer of two MnmE and two MnmG subunits. FAD serves as cofactor.

Its subcellular location is the cytoplasm. NAD-binding protein involved in the addition of a carboxymethylaminomethyl (cmnm) group at the wobble position (U34) of certain tRNAs, forming tRNA-cmnm(5)s(2)U34. In Lactiplantibacillus plantarum (strain ATCC BAA-793 / NCIMB 8826 / WCFS1) (Lactobacillus plantarum), this protein is tRNA uridine 5-carboxymethylaminomethyl modification enzyme MnmG.